The primary structure comprises 116 residues: MDSNHSAPAIVITVINDCASLWHEVLLGIEEEGIPFLLQHHPAGDIVDSAWQAARSSPLLVGIACDRHSLVVHYKNLPASAPLFTLMHHQDSQAQRNTGNNAARLVKGIPFRDLHA.

Mg(2+) is bound at residue Glu31.

This sequence belongs to the DdrB/PduH family. Forms a heterotetramer PduG(2)/PduH(2). Mg(2+) is required as a cofactor.

The protein resides in the bacterial microcompartment. It catalyses the reaction ATP + H2O = ADP + phosphate + H(+). It participates in polyol metabolism; 1,2-propanediol degradation. Small subunit of the propanediol dehydratase-reactivating factor (DDR), which reactivates suicidally inhibited adenosylcobalamin-dependent propanediol dehydratase (diol dehydratase, DDH) found in the bacterial microcompartment (BMC) dedicated to 1,2-propanediol (1,2-PD) degradation. Reactivates inactivated DDH in the presence of ATP, Mg(2+) and free adenosylcobalamin (AdoCbl), by mediating the exchange of the tightly bound damaged cofactor AdoCbl for a free intact one. Its function is as follows. The 1,2-PD-specific bacterial microcompartment (BMC) concentrates low levels of 1,2-PD catabolic enzymes, concentrates volatile reaction intermediates thus enhancing pathway flux and keeps the level of toxic, mutagenic propionaldehyde low. This is Propanediol dehydratase-reactivating factor small subunit from Salmonella typhimurium (strain LT2 / SGSC1412 / ATCC 700720).